The primary structure comprises 296 residues: Nitrogenase iron protein (296 aa).

11-18 serves as a coordination point for ATP; that stretch reads GKGGIGKS. [4Fe-4S] cluster is bound at residue Cys99. An ADP-ribosylarginine; by dinitrogenase reductase ADP-ribosyltransferase modification is found at Arg102. Cys133 provides a ligand contact to [4Fe-4S] cluster.

Belongs to the NifH/BchL/ChlL family. In terms of assembly, homodimer. It depends on [4Fe-4S] cluster as a cofactor. In terms of processing, the reversible ADP-ribosylation of Arg-102 inactivates the nitrogenase reductase and regulates nitrogenase activity.

It catalyses the reaction N2 + 8 reduced [2Fe-2S]-[ferredoxin] + 16 ATP + 16 H2O = H2 + 8 oxidized [2Fe-2S]-[ferredoxin] + 2 NH4(+) + 16 ADP + 16 phosphate + 6 H(+). Its function is as follows. The key enzymatic reactions in nitrogen fixation are catalyzed by the nitrogenase complex, which has 2 components: the iron protein and the molybdenum-iron protein. In Sinorhizobium fredii (strain NBRC 101917 / NGR234), this protein is Nitrogenase iron protein (nifH1).